Here is a 493-residue protein sequence, read N- to C-terminus: Angiopoietin-related protein 2 (493 aa).

The first 22 residues, 1 to 22 (MRPLCVTCWWLGLLAAMGAVAG), serve as a signal peptide directing secretion. 2 coiled-coil regions span residues 76 to 115 (PEVL…VDGG) and 152 to 206 (ALEL…HCQR). N-linked (GlcNAc...) asparagine glycans are attached at residues Asn164 and Asn192. Positions 269–489 (DKPSGPWRDC…KVVMMIRPNP (221 aa)) constitute a Fibrinogen C-terminal domain. 2 disulfide bridges follow: Cys278–Cys307 and Cys430–Cys443.

N-glycosylated. As to expression, widely expressed in heart, small intestine, spleen and stomach. Also found in lower levels in colon, ovary, adrenal gland, skeletal muscle and in prostate.

The protein localises to the secreted. In terms of biological role, induces sprouting in endothelial cells through an autocrine and paracrine action. In Homo sapiens (Human), this protein is Angiopoietin-related protein 2 (ANGPTL2).